Reading from the N-terminus, the 401-residue chain is S-adenosylmethionine synthase (401 aa).

136–141 is an ATP binding site; sequence GQGSVD.

This sequence belongs to the AdoMet synthase 2 family. The cofactor is Mg(2+).

The catalysed reaction is L-methionine + ATP + H2O = S-adenosyl-L-methionine + phosphate + diphosphate. The protein operates within amino-acid biosynthesis; S-adenosyl-L-methionine biosynthesis; S-adenosyl-L-methionine from L-methionine: step 1/1. Functionally, catalyzes the formation of S-adenosylmethionine from methionine and ATP. The chain is S-adenosylmethionine synthase (mat) from Pyrococcus abyssi (strain GE5 / Orsay).